The sequence spans 100 residues: Large ribosomal subunit protein eL21 (100 aa).

Residues 1-21 (MVKRTHGYRYKSRKLLRKKPR) are compositionally biased toward basic residues. Residues 1–22 (MVKRTHGYRYKSRKLLRKKPRE) form a disordered region.

Belongs to the eukaryotic ribosomal protein eL21 family.

The protein is Large ribosomal subunit protein eL21 of Pyrobaculum neutrophilum (strain DSM 2338 / JCM 9278 / NBRC 100436 / V24Sta) (Thermoproteus neutrophilus).